Here is a 432-residue protein sequence, read N- to C-terminus: E3 ubiquitin-protein ligase ATL42 (432 aa).

Positions Met-1–Ala-18 are cleaved as a signal peptide. The helical transmembrane segment at Leu-37–Tyr-57 threads the bilayer. An RING-type; atypical zinc finger spans residues Cys-123–Arg-165.

The protein belongs to the RING-type zinc finger family. ATL subfamily.

Its subcellular location is the membrane. The catalysed reaction is S-ubiquitinyl-[E2 ubiquitin-conjugating enzyme]-L-cysteine + [acceptor protein]-L-lysine = [E2 ubiquitin-conjugating enzyme]-L-cysteine + N(6)-ubiquitinyl-[acceptor protein]-L-lysine.. The protein operates within protein modification; protein ubiquitination. Functionally, E3 ubiquitin-protein ligase able to catalyze polyubiquitination with ubiquitin-conjugating enzyme E2 UBC8 in vitro. This is E3 ubiquitin-protein ligase ATL42 (ATL42) from Arabidopsis thaliana (Mouse-ear cress).